A 155-amino-acid polypeptide reads, in one-letter code: uncharacterized protein (155 aa).

The tract at residues 135–155 (SQANSKNDSNSKDDLPNPFSV) is disordered.

This is an uncharacterized protein from Acidianus convivator (ATV).